A 340-amino-acid polypeptide reads, in one-letter code: Glycerol-3-phosphate dehydrogenase [NAD(P)+] (340 aa).

NADPH-binding residues include Ser-13, Trp-14, and Lys-108. Lys-108, Gly-139, and Ser-141 together coordinate sn-glycerol 3-phosphate. Ala-143 lines the NADPH pocket. Sn-glycerol 3-phosphate contacts are provided by Lys-194, Asp-247, Ser-257, Arg-258, and Asn-259. Lys-194 acts as the Proton acceptor in catalysis. Arg-258 lines the NADPH pocket. Val-282 and Glu-284 together coordinate NADPH.

The protein belongs to the NAD-dependent glycerol-3-phosphate dehydrogenase family.

It localises to the cytoplasm. The enzyme catalyses sn-glycerol 3-phosphate + NAD(+) = dihydroxyacetone phosphate + NADH + H(+). It catalyses the reaction sn-glycerol 3-phosphate + NADP(+) = dihydroxyacetone phosphate + NADPH + H(+). Its pathway is membrane lipid metabolism; glycerophospholipid metabolism. Functionally, catalyzes the reduction of the glycolytic intermediate dihydroxyacetone phosphate (DHAP) to sn-glycerol 3-phosphate (G3P), the key precursor for phospholipid synthesis. This chain is Glycerol-3-phosphate dehydrogenase [NAD(P)+], found in Streptococcus thermophilus (strain ATCC BAA-491 / LMD-9).